The sequence spans 499 residues: Dipeptide and tripeptide permease A (499 aa).

The Cytoplasmic portion of the chain corresponds to 1-34 (MSTANKKPAESVSMNAFKQPRSFYLIFSIELWER). Residues 35 to 55 (FGFYGLQGIMAVYLVKQLGMS) traverse the membrane as a helical segment. At 56–59 (EADS) the chain is on the periplasmic side. Residues 60-80 (ITLFSSFSALVYGLVAIGGWL) traverse the membrane as a helical segment. Residues 81–89 (GDKVLGTKR) are Cytoplasmic-facing. A helical membrane pass occupies residues 90–110 (VIMLGTIVLAIGYALVAWSGH). A topological domain (periplasmic) is located at residue aspartate 111. The helical transmembrane segment at 112–132 (AAIVYFGMATIAVGNGLFKAN) threads the bilayer. Over 133–153 (PSALLSTCYEKDDPRLDGAFT) the chain is Cytoplasmic. Residues 154-174 (MYYMAINIGSFFSMLATPWLA) form a helical membrane-spanning segment. The Periplasmic segment spans residues 175–178 (EKFG). The chain crosses the membrane as a helical span at residues 179-199 (WSVAFSLSFVGMLITLVNFIF). Residues 200–217 (CKKWVKDYGSKPDFAPLH) are Cytoplasmic-facing. A helical transmembrane segment spans residues 218–238 (VGKLLATIVGIVVLVAIATWL). The Periplasmic segment spans residues 239 to 246 (LHNQGIAR). Residues 247-267 (LVLGVVALGIVIIFAKEAFAM) traverse the membrane as a helical segment. The Cytoplasmic portion of the chain corresponds to 268-274 (QGAARRK). A helical transmembrane segment spans residues 275–295 (MIVAFILMLEAIVFFVLYQQM). Over 296-320 (PTSLNFFAIRNVEHSILGIAFQPEQ) the chain is Periplasmic. A helical membrane pass occupies residues 321–341 (FQALNPFWIMIGSPILAAIYN). The Cytoplasmic segment spans residues 342-350 (KMGDRLPMP). A helical membrane pass occupies residues 351-371 (FKFTIGMLLCSGAFLVLPLGA). Topologically, residues 372-383 (KFASEAGIVSVN) are periplasmic. Residues 384–404 (WLILSYALQSIGELMISGLGL) traverse the membrane as a helical segment. Residues 405–414 (AMVAQLVPQR) are Cytoplasmic-facing. Residues 415–435 (LMGFIMGSWFLTTAGAAMIAG) traverse the membrane as a helical segment. At 436-459 (KVANLMAVPENVSDPLQSLEVYGR) the chain is on the periplasmic side. The chain crosses the membrane as a helical span at residues 460-480 (VFMQIGIATGVIAVLMLLTAP). Residues 481 to 499 (LLNRMTQEDKPKETDTAHA) lie on the Cytoplasmic side of the membrane.

Belongs to the major facilitator superfamily. Proton-dependent oligopeptide transporter (POT/PTR) (TC 2.A.17) family. DtpA subfamily.

It localises to the cell inner membrane. Its function is as follows. Proton-dependent permease that transports di- and tripeptides. The chain is Dipeptide and tripeptide permease A from Cronobacter turicensis (strain DSM 18703 / CCUG 55852 / LMG 23827 / z3032).